Reading from the N-terminus, the 203-residue chain is Translation initiation factor IF-3 (203 aa).

The tract at residues Q168–E203 is disordered. Residues K193–E203 are compositionally biased toward basic and acidic residues.

Belongs to the IF-3 family. Monomer.

It localises to the cytoplasm. Its function is as follows. IF-3 binds to the 30S ribosomal subunit and shifts the equilibrium between 70S ribosomes and their 50S and 30S subunits in favor of the free subunits, thus enhancing the availability of 30S subunits on which protein synthesis initiation begins. The sequence is that of Translation initiation factor IF-3 from Bacteroides fragilis (strain ATCC 25285 / DSM 2151 / CCUG 4856 / JCM 11019 / LMG 10263 / NCTC 9343 / Onslow / VPI 2553 / EN-2).